Reading from the N-terminus, the 277-residue chain is MKVQDLHLDYHLVEDILKAFLFNELRKFGFSSVVLGLSGGIDSAVVCELAVRALGRQNVLGLMMPYASSSMESLEHAELMIKKLGIQAEEMPITPVVDAFFSSVPENQLLRRGNIMARTRMILLYDVSARDGRLVTGTSNKTELLLGYGTLFGDMASAINPIGDLYKTQVRGLARHLAIPEPLIVKAPSADLWEGQSDEDDLGFSYEAVDLLLYMMLEKRMDKHAILGQGIEEPFYDRVRKMVVRNQYKRMMPVIAKLSGRTPGIDFRYARDWQEVR.

36 to 43 is an ATP binding site; that stretch reads GLSGGIDS. D42 is a binding site for Mg(2+). Residue R118 coordinates deamido-NAD(+). T138 contacts ATP. Residue E143 participates in Mg(2+) binding. 2 residues coordinate ATP: K167 and S189.

It belongs to the NAD synthetase family. As to quaternary structure, homodimer.

It catalyses the reaction deamido-NAD(+) + NH4(+) + ATP = AMP + diphosphate + NAD(+) + H(+). Its pathway is cofactor biosynthesis; NAD(+) biosynthesis; NAD(+) from deamido-NAD(+) (ammonia route): step 1/1. Functionally, catalyzes the ATP-dependent amidation of deamido-NAD to form NAD. Uses ammonia as a nitrogen source. This Pelodictyon phaeoclathratiforme (strain DSM 5477 / BU-1) protein is NH(3)-dependent NAD(+) synthetase.